We begin with the raw amino-acid sequence, 531 residues long: Pancreatic secretory granule membrane major glycoprotein GP2 (531 aa).

Residues 1–21 (MVGCDLLWLAAASCVLTLVSP) form the signal peptide. N-linked (GlcNAc...) asparagine glycosylation is present at asparagine 33. Positions 34–53 (SSNLDLDCGSPDSPSSGICF) are beta hairpin. 11 disulfides stabilise this stretch: cysteine 41–cysteine 52, cysteine 56–cysteine 151, cysteine 79–cysteine 169, cysteine 101–cysteine 139, cysteine 107–cysteine 174, cysteine 132–cysteine 140, cysteine 184–cysteine 194, cysteine 188–cysteine 203, cysteine 205–cysteine 235, cysteine 223–cysteine 314, and cysteine 255–cysteine 278. Residues 54–74 (DPCQNHTVLNDPTRSTENNDS) are D10C. N-linked (GlcNAc...) asparagine glycosylation is found at asparagine 58 and asparagine 72. The EGF-like domain maps to 180 to 224 (APKNCEITCRPEEECVFQNNNWSCVCRQDLHVSDSQSLQPLLDCG). Asparagine 200 carries N-linked (GlcNAc...) asparagine glycosylation. The interval 222-315 (DCGDNEIKVK…FRVNVNFQCA (94 aa)) is ZP-N. The ZP domain maps to 222 to 478 (DCGDNEIKVK…PSCSTNRLRS (257 aa)). 2 N-linked (GlcNAc...) asparagine glycosylation sites follow: asparagine 256 and asparagine 285. Residues 316–339 (YPLDMSVSLETALQPIVSSLTVDV) are flexible ZP-N/ZP-C linker. The tract at residues 340–351 (DGAGEFNVKMAL) is internal hydrophobic patch (IHP). The tract at residues 340 to 478 (DGAGEFNVKM…PSCSTNRLRS (139 aa)) is ZP-C. 3 disulfide bridges follow: cysteine 395–cysteine 455, cysteine 416–cysteine 471, and cysteine 460–cysteine 467. The segment at 485-493 (YNRVLDLGP) is external hydrophobic patch (EHP).

As to quaternary structure, interacts with SYCN. Interacts with bacterial adhesin fimH. Post-translationally, N-glycosylated. As to expression, specifically expressed by M (microfold) cells which are atypical epithelial cells of the intestine.

It is found in the zymogen granule membrane. The protein resides in the secreted. Its subcellular location is the cell membrane. It localises to the apical cell membrane. The protein localises to the membrane raft. It is found in the endosome. In terms of biological role, functions as an intestinal M-cell transcytotic receptor specific of type-I-piliated bacteria that participates in the mucosal immune response toward these bacteria. At the apical membrane of M-cells it binds fimH, a protein of the bacteria type I pilus tip. Internalizes bound bacteria, like E.coli and S.typhimurium, from the lumen of the intestine and delivers them, through M-cells, to the underlying organized lymphoid follicles where they are captured by antigen-presenting dendritic cells to elicit a mucosal immune response. The polypeptide is Pancreatic secretory granule membrane major glycoprotein GP2 (Mus musculus (Mouse)).